Consider the following 338-residue polypeptide: Ketol-acid reductoisomerase (NADP(+)) (338 aa).

Residues 1 to 181 form the KARI N-terminal Rossmann domain; sequence MKVFYDKDCD…GGGKAGIIET (181 aa). Residues 24-27, Arg-47, and Ser-52 each bind NADP(+); that span reads YGSQ. Residue His-107 is part of the active site. Gly-133 contacts NADP(+). In terms of domain architecture, KARI C-terminal knotted spans 182 to 327; that stretch reads NFREETETDL…GKLRAMMPWI (146 aa). Mg(2+) contacts are provided by Asp-190, Glu-194, Glu-226, and Glu-230. Ser-251 lines the substrate pocket.

The protein belongs to the ketol-acid reductoisomerase family. It depends on Mg(2+) as a cofactor.

The enzyme catalyses (2R)-2,3-dihydroxy-3-methylbutanoate + NADP(+) = (2S)-2-acetolactate + NADPH + H(+). It catalyses the reaction (2R,3R)-2,3-dihydroxy-3-methylpentanoate + NADP(+) = (S)-2-ethyl-2-hydroxy-3-oxobutanoate + NADPH + H(+). The protein operates within amino-acid biosynthesis; L-isoleucine biosynthesis; L-isoleucine from 2-oxobutanoate: step 2/4. It functions in the pathway amino-acid biosynthesis; L-valine biosynthesis; L-valine from pyruvate: step 2/4. Its function is as follows. Involved in the biosynthesis of branched-chain amino acids (BCAA). Catalyzes an alkyl-migration followed by a ketol-acid reduction of (S)-2-acetolactate (S2AL) to yield (R)-2,3-dihydroxy-isovalerate. In the isomerase reaction, S2AL is rearranged via a Mg-dependent methyl migration to produce 3-hydroxy-3-methyl-2-ketobutyrate (HMKB). In the reductase reaction, this 2-ketoacid undergoes a metal-dependent reduction by NADPH to yield (R)-2,3-dihydroxy-isovalerate. The sequence is that of Ketol-acid reductoisomerase (NADP(+)) from Polaromonas naphthalenivorans (strain CJ2).